Here is a 96-residue protein sequence, read N- to C-terminus: uncharacterized protein (96 aa).

Asparagine 4 is a glycosylation site (N-linked (GlcNAc...) asparagine). Residues 59-81 (VFFTIFDTIITIIVRSGIPFPLL) traverse the membrane as a helical segment.

The protein localises to the membrane. This is an uncharacterized protein from Saccharomyces cerevisiae (strain ATCC 204508 / S288c) (Baker's yeast).